Here is a 470-residue protein sequence, read N- to C-terminus: Proline--tRNA ligase (470 aa).

This sequence belongs to the class-II aminoacyl-tRNA synthetase family. ProS type 3 subfamily. In terms of assembly, homodimer.

Its subcellular location is the cytoplasm. The enzyme catalyses tRNA(Pro) + L-proline + ATP = L-prolyl-tRNA(Pro) + AMP + diphosphate. Functionally, catalyzes the attachment of proline to tRNA(Pro) in a two-step reaction: proline is first activated by ATP to form Pro-AMP and then transferred to the acceptor end of tRNA(Pro). The chain is Proline--tRNA ligase from Malacoplasma penetrans (strain HF-2) (Mycoplasma penetrans).